Consider the following 385-residue polypeptide: Centrosomal protein of 44 kDa (385 aa).

The tract at residues 11–192 (RNLEQVLRSL…GANIPEDTVT (182 aa)) is binds with microtubules and centrioles. The segment at 126 to 154 (LEKTPSQQRKKTSSAKSEPCSSTEKTSTE) is disordered. The span at 139 to 154 (SAKSEPCSSTEKTSTE) shows a compositional bias: polar residues. Residues 230–271 (EVTALQSMLAECQEKLKKLTCIESRLESLEEKMKGKVLVNEK) are a coiled coil. A disordered region spans residues 303–348 (SEDYSSSSDMDSLNPDRKSKEERHANIPLSSGYSTVSSDSTPRTST). The span at 305 to 314 (DYSSSSDMDS) shows a compositional bias: low complexity. Residues 316-327 (NPDRKSKEERHA) show a composition bias toward basic and acidic residues. Low complexity predominate over residues 332 to 342 (SSGYSTVSSDS). Phosphoserine is present on S342. Position 343 is a phosphothreonine (T343). Residues 358 to 381 (SEETTMQKMERMKKMFEETAELLK) adopt a coiled-coil conformation.

Interacts with CROCC. Interacts with POC1B; the interaction is direct and recruits POC1B to centriolar microtubules. Binds to centriolar microtubules.

Its subcellular location is the cytoplasm. The protein resides in the cytoskeleton. It localises to the microtubule organizing center. The protein localises to the centrosome. It is found in the centriole. Its subcellular location is the spindle pole. The protein resides in the midbody. Its function is as follows. Centriole-enriched microtubule-binding protein involved in centriole biogenesis. In collaboration with CEP295 and POC1B, is required for the centriole-to-centrosome conversion by ensuring the formation of bona fide centriole wall. Functions as a linker component that maintains centrosome cohesion. Associates with CROCC and regulates its stability and localization to the centrosome. This is Centrosomal protein of 44 kDa (CEP44) from Bos taurus (Bovine).